The chain runs to 135 residues: uncharacterized protein (135 aa).

3 helical membrane passes run 13 to 35, 82 to 101, and 108 to 130; these read AKVI…AMYL, VAVF…LLSI, and IYRI…PLIL.

The protein localises to the cell membrane. This is an uncharacterized protein from Archaeoglobus fulgidus (strain ATCC 49558 / DSM 4304 / JCM 9628 / NBRC 100126 / VC-16).